The following is a 282-amino-acid chain: ADP-ribosyl cyclase/cyclic ADP-ribose hydrolase (282 aa).

A signal peptide spans 1–24; sequence MSPVAIIACVCLAVTLTSISPSEA. 5 disulfides stabilise this stretch: cysteine 39–cysteine 58, cysteine 75–cysteine 155, cysteine 136–cysteine 149, cysteine 230–cysteine 251, and cysteine 263–cysteine 272.

Belongs to the ADP-ribosyl cyclase family. Has different isoforms which may be the result of different amounts of phosphorylation. As to expression, immature occoyctes. Oocytes.

It localises to the cytoplasmic vesicle. The catalysed reaction is NAD(+) = cyclic ADP-beta-D-ribose + nicotinamide + H(+). It catalyses the reaction nicotinate + NADP(+) = nicotinate-adenine dinucleotide phosphate + nicotinamide. It carries out the reaction 2'-phospho-cyclic ADP-ribose + nicotinate = nicotinate-adenine dinucleotide phosphate. With respect to regulation, activity is presumably regulated by its sequestration in vesicles before egg fertilization. After fertilization and upon NADase release, it could then be regulated via its potential phosphorylation sites. Synthesizes cyclic ADP-ribose (cADPR), a second messenger for calcium mobilization from endoplasmic reticulum; ADP-ribose is a minor product. Synthesizes the Ca(2+) mobilizer nicotinate-adenine dinucleotide phosphate from 2'-phospho-cADPR and nicotinic acid as well as from NADP(+) and nicotinic acid; with NADP(+) as substrate preferentially catalyzes NADP(+) hydrolysis rather than NAADP(+) synthesis, about 70-fold better at pH 7.4. Has cADPR hydrolase activity at very high enzyme concentrations, which is probably not physiological. The conversion of NAD(+) into ADP-ribose is also only observed at high enzyme concentrations and results from the hydrolysis of cADP-ribose. This chain is ADP-ribosyl cyclase/cyclic ADP-ribose hydrolase, found in Aplysia californica (California sea hare).